Consider the following 126-residue polypeptide: Fluoride-specific ion channel FluC (126 aa).

Helical transmembrane passes span 6 to 26 (FVAV…FAVL), 36 to 56 (YGTL…VGFF), 68 to 88 (LLAV…SSEV), and 99 to 119 (IGML…MLGL). Positions 76 and 79 each coordinate Na(+).

Belongs to the fluoride channel Fluc/FEX (TC 1.A.43) family.

It localises to the cell inner membrane. The catalysed reaction is fluoride(in) = fluoride(out). Na(+) is not transported, but it plays an essential structural role and its presence is essential for fluoride channel function. Its function is as follows. Fluoride-specific ion channel. Important for reducing fluoride concentration in the cell, thus reducing its toxicity. In Ralstonia nicotianae (strain ATCC BAA-1114 / GMI1000) (Ralstonia solanacearum), this protein is Fluoride-specific ion channel FluC.